The chain runs to 338 residues: 26S proteasome regulatory subunit RPN8 (338 aa).

The residue at position 2 (Ser2) is an N-acetylserine. Residues 8–143 (VTIAPLVLLS…TDAYVAIEQV (136 aa)) form the MPN domain. The span at 301–326 (IQEQRVKDKQSKVSDDSESESGDKEA) shows a compositional bias: basic and acidic residues. Residues 301–338 (IQEQRVKDKQSKVSDDSESESGDKEATAPLIQRKNKKN) are disordered. Phosphoserine occurs at positions 314, 317, and 319. Residue Thr327 is modified to Phosphothreonine.

Belongs to the peptidase M67A family. In terms of processing, N-acetylated by NAT1.

Functionally, acts as a regulatory subunit of the 26S proteasome which is involved in the ATP-dependent degradation of ubiquitinated proteins. This chain is 26S proteasome regulatory subunit RPN8 (RPN8), found in Saccharomyces cerevisiae (strain ATCC 204508 / S288c) (Baker's yeast).